Consider the following 346-residue polypeptide: Small glutamine-rich tetratricopeptide repeat-containing protein 2 (346 aa).

TPR repeat units lie at residues 102–135 (AEDL…LPTN), 136–169 (AIYY…DPSY), 170–203 (FRGY…EGDN), and 205–229 (TEAM…EKTV). The disordered stretch occupies residues 219-249 (VEQSLNLEKTVPEQSRDADVDASQGASAGGL). Positions 228–237 (TVPEQSRDAD) are enriched in basic and acidic residues. Residue threonine 308 is modified to Phosphothreonine. The disordered stretch occupies residues 325-346 (GNLFGGAGAQSTDETPDNENKQ).

It belongs to the SGT family. Interacts with HSC82, HSP104, MDY2, SSA1 and SSA2.

The protein localises to the cytoplasm. Co-chaperone that binds to the molecular chaperone Hsp70 (SSA1 and SSA2). Regulates Hsp70 ATPase activity. Required for recovery from heat shock. The sequence is that of Small glutamine-rich tetratricopeptide repeat-containing protein 2 (SGT2) from Saccharomyces cerevisiae (strain ATCC 204508 / S288c) (Baker's yeast).